The sequence spans 218 residues: Small ribosomal subunit protein uS3c (218 aa).

The KH type-2 domain occupies V47–T118.

The protein belongs to the universal ribosomal protein uS3 family. In terms of assembly, part of the 30S ribosomal subunit.

It localises to the plastid. Its subcellular location is the chloroplast. The protein is Small ribosomal subunit protein uS3c (rps3) of Vitis vinifera (Grape).